The sequence spans 263 residues: uncharacterized protein (263 aa).

Residue 31–38 (GPTGSGKT) coordinates ATP.

It belongs to the CbbQ/NirQ/NorQ/GpvN family.

This is an uncharacterized protein from Staphylococcus saprophyticus subsp. saprophyticus (strain ATCC 15305 / DSM 20229 / NCIMB 8711 / NCTC 7292 / S-41).